A 190-amino-acid polypeptide reads, in one-letter code: Small ribosomal subunit protein uS4c (190 aa).

The S4 RNA-binding domain maps to 92-152 (RLDHVVYRAG…KSPSSAQLPP (61 aa)).

Belongs to the universal ribosomal protein uS4 family. Part of the 30S ribosomal subunit. Contacts protein S5. The interaction surface between S4 and S5 is involved in control of translational fidelity.

The protein resides in the plastid. It localises to the chloroplast. Its function is as follows. One of the primary rRNA binding proteins, it binds directly to 16S rRNA where it nucleates assembly of the body of the 30S subunit. Functionally, with S5 and S12 plays an important role in translational accuracy. The polypeptide is Small ribosomal subunit protein uS4c (rps4) (Cyanidioschyzon merolae (strain NIES-3377 / 10D) (Unicellular red alga)).